A 107-amino-acid polypeptide reads, in one-letter code: PAKGANVFWKCMACHAVGEGAKNKVGPELNGIIGRKMGSIEGFNYSDTLKEHNAKGDVWTAEILSQYLANPKGYMPGVKMVFAGLPKEIRADDLEAYLKTFNADGTK.

The heme c site is built by Cys-11, Cys-14, His-15, and Met-80.

Post-translationally, binds 1 heme c group covalently per subunit.

The sequence is that of Cytochrome c-550 from Ancylobacter novellus (Thiobacillus novellus).